Reading from the N-terminus, the 91-residue chain is Gas vesicle protein K (91 aa).

The protein belongs to the gas vesicle GvpK family.

The protein resides in the gas vesicle. Its function is as follows. Might be involved in nucleating gas vesicle formation. Gas vesicles are hollow, gas filled proteinaceous nanostructures found in some microorganisms. It is not clear what function gas vesicles perform in soil bacteria. The sequence is that of Gas vesicle protein K from Streptomyces sp. (strain CB03234).